The chain runs to 70 residues: Drosomycin (70 aa).

The N-terminal stretch at 1 to 20 (MMQIKYLFALFAVLMLVVLG) is a signal peptide. Positions 21–26 (ANEADA) are excised as a propeptide. Cystine bridges form between Cys28–Cys70, Cys37–Cys59, Cys45–Cys65, and Cys49–Cys67. Residue Asn42 is glycosylated (N-linked (GlcNAc...) asparagine).

As to expression, hemolymph (at protein level). Synthesized in the fat body and is secreted into the blood. In larvae, expressed in the visceral branches and posterior spiracles of the trachea.

The protein localises to the secreted. Functionally, possesses antifungal activity and is active against a relatively broad spectrum of filamentous fungi. It inhibits spore germination at high concentrations and at low concentrations delays growth of hyphae which subsequently exhibit abnormal morphology. Spz C-106 in the hemolymph controls expression of the antifungal peptide by acting as a ligand of Tl and inducing an intracellular signaling pathway. Part of a psh-dependent Toll pathway, which may function in activating the systematic immune response in response to localized melanization of the tracheal system. The protein is Drosomycin (Drs) of Drosophila melanogaster (Fruit fly).